Consider the following 346-residue polypeptide: Dehydrogenase orf1 (346 aa).

Residue 43 to 48 (VDYATQ) coordinates NADP(+). 133–140 (LAFSTAIV) is a binding site for substrate. Residues 170–173 (ATSV), 193–196 (SPHN), Y211, and 251–252 (LN) contribute to the NADP(+) site. Position 269–273 (269–273 (APPNV)) interacts with substrate. 336-337 (VS) contacts NADP(+).

The protein belongs to the zinc-containing alcohol dehydrogenase family.

The protein operates within secondary metabolite biosynthesis. Dehydrogenase; part of the gene cluster that mediates the biosynthesis of nigerpyrone and its derivatives carbonarone A and pestalamide A. The biosynthesis pathway begins with the polyketide assembly by epaA to form phenylacetyl triketide precursor from successive condensation of two malonyl-CoA, presumably with one phenylacetyl-CoA starter unit produced by the phenylacetyl-CoA ligase epaB. For the nigerpyrone biosynthesis, the reactive polyketide chain is released as an aldehyde through the R-domain. A nonenzymatic cyclization and dehydration may create nigerpyrone. For the biosynthesis of carbonarone A and pestalamide A, an extra methyl group is added through the C-methyltransferase domain. Several further steps involving the dehydrogenase orf1, the cytochrome P450 monooxygenase orf2 and the FAD-dependent monooxygenase orf3 are required to form a carbonarone A precursor which is converted to carbonarone A via cyclization. The O-acetyltransferase epaC could catalyze the transfer of 2-methylsuccinyl-CoA, a common intermediate in the ethylmalonyl-CoA pathway, to generate the final product pestalamide A. In Aspergillus niger (strain ATCC MYA-4892 / CBS 513.88 / FGSC A1513), this protein is Dehydrogenase orf1.